A 111-amino-acid chain; its full sequence is uncharacterized protein (111 aa).

The chain crosses the membrane as a helical span at residues 27–47; sequence HLFHFPSISFFFFFFFFFFSF.

It localises to the membrane. This is an uncharacterized protein from Saccharomyces cerevisiae (strain ATCC 204508 / S288c) (Baker's yeast).